Consider the following 172-residue polypeptide: L-methionine sulfoximine/L-methionine sulfone acetyltransferase (172 aa).

An N-acetyltransferase domain is found at 3 to 166 (ASIRDAGVAD…DLTFMQLNLD (164 aa)). Substrate-binding positions include 75 to 77 (RPF) and 85 to 87 (EHS). Residues 88 to 90 (VYV), 96 to 101 (GKGLGV), and asparagine 127 each bind acetyl-CoA.

In terms of assembly, homodimer.

It catalyses the reaction L-methionine sulfoximine + acetyl-CoA = N-acetyl-L-methionine sulfoximine + CoA + H(+). The catalysed reaction is L-methionine sulfone + acetyl-CoA = N-acetyl-L-methionine sulfone + CoA + H(+). Plays a role in the resistance against the toxic effects of L-methionine sulfoximine (MSX), a rare amino acid, which inhibits glutamine synthetase (GlnA). Catalyzes the acetylation of L-methionine sulfoximine (MSX). It can also use L-methionine sulfone (MSO). The polypeptide is L-methionine sulfoximine/L-methionine sulfone acetyltransferase (Pseudomonas paraeruginosa (strain DSM 24068 / PA7) (Pseudomonas aeruginosa (strain PA7))).